A 558-amino-acid polypeptide reads, in one-letter code: Dihydroxy-acid dehydratase (558 aa).

Residue C48 coordinates [2Fe-2S] cluster. Position 80 (D80) interacts with Mg(2+). C121 contacts [2Fe-2S] cluster. D122 and K123 together coordinate Mg(2+). K123 carries the N6-carboxylysine modification. C193 serves as a coordination point for [2Fe-2S] cluster. E445 serves as a coordination point for Mg(2+). The Proton acceptor role is filled by S471.

It belongs to the IlvD/Edd family. Homodimer. [2Fe-2S] cluster is required as a cofactor. The cofactor is Mg(2+).

The catalysed reaction is (2R)-2,3-dihydroxy-3-methylbutanoate = 3-methyl-2-oxobutanoate + H2O. It catalyses the reaction (2R,3R)-2,3-dihydroxy-3-methylpentanoate = (S)-3-methyl-2-oxopentanoate + H2O. It functions in the pathway amino-acid biosynthesis; L-isoleucine biosynthesis; L-isoleucine from 2-oxobutanoate: step 3/4. Its pathway is amino-acid biosynthesis; L-valine biosynthesis; L-valine from pyruvate: step 3/4. Functions in the biosynthesis of branched-chain amino acids. Catalyzes the dehydration of (2R,3R)-2,3-dihydroxy-3-methylpentanoate (2,3-dihydroxy-3-methylvalerate) into 2-oxo-3-methylpentanoate (2-oxo-3-methylvalerate) and of (2R)-2,3-dihydroxy-3-methylbutanoate (2,3-dihydroxyisovalerate) into 2-oxo-3-methylbutanoate (2-oxoisovalerate), the penultimate precursor to L-isoleucine and L-valine, respectively. This is Dihydroxy-acid dehydratase from Prochlorococcus marinus (strain SARG / CCMP1375 / SS120).